The primary structure comprises 102 residues: Citrate lyase acyl carrier protein (102 aa).

Ser14 bears the O-(phosphoribosyl dephospho-coenzyme A)serine mark.

This sequence belongs to the CitD family. As to quaternary structure, oligomer with a subunit composition of (alpha,beta,gamma)6.

It localises to the cytoplasm. Covalent carrier of the coenzyme of citrate lyase. The protein is Citrate lyase acyl carrier protein of Streptococcus equi subsp. zooepidemicus (strain H70).